The sequence spans 167 residues: Translationally-controlled tumor protein homolog (167 aa).

In terms of domain architecture, TCTP spans 1-167; that stretch reads MIIYKDIFSN…WKHGIVEEKI (167 aa). 2 positions are modified to phosphoserine: serine 9 and serine 15.

It belongs to the TCTP family. As to quaternary structure, interacts with the 40S and 60S ribosomal subunits. Interacts with microtubules.

The protein resides in the cytoplasm. It is found in the cytoskeleton. It localises to the mitochondrion. Involved in protein synthesis. Involved in microtubule stabilization. This is Translationally-controlled tumor protein homolog (TMA19) from Saccharomyces cerevisiae (strain ATCC 204508 / S288c) (Baker's yeast).